A 269-amino-acid chain; its full sequence is Small ribosomal subunit protein uS2 (269 aa).

The disordered stretch occupies residues 228 to 269 (QLDSDDDYEEFDESLAEGDYDDYDEEEDEDSETVSSQEGEEE). Residues 230–269 (DSDDDYEEFDESLAEGDYDDYDEEEDEDSETVSSQEGEEE) show a composition bias toward acidic residues.

The protein belongs to the universal ribosomal protein uS2 family.

The chain is Small ribosomal subunit protein uS2 from Crocosphaera subtropica (strain ATCC 51142 / BH68) (Cyanothece sp. (strain ATCC 51142)).